The primary structure comprises 224 residues: Claudin-19 (224 aa).

At 1–7 (MANSGLQ) the chain is on the cytoplasmic side. A helical membrane pass occupies residues 8–28 (LLGYFLALGGWVGIIASTALP). At 29-81 (QWKQSSYAGDAIITAVGLYEGLWMSCASQSTGQVQCKLYDSLLALDGHIQSAR) the chain is on the extracellular side. Residues C54 and C64 are joined by a disulfide bond. Residues 82–102 (ALMVVAVLLGFVAMVLSVVGM) traverse the membrane as a helical segment. Residues 103-117 (KCTRVGDSNPIAKGR) are Cytoplasmic-facing. The helical transmembrane segment at 118-138 (VAIAGGALFILAGLCTLTAVS) threads the bilayer. Topologically, residues 139–160 (WYATLVTQEFFNPSTPVNARYE) are extracellular. A helical transmembrane segment spans residues 161–181 (FGPALFVGWASAGLAVLGGSF). At 182 to 224 (LCCTCPEPERPNSSPQPYRPGPSAAAREPVVKLPASAKGPLGV) the chain is on the cytoplasmic side. Positions 191–224 (RPNSSPQPYRPGPSAAAREPVVKLPASAKGPLGV) are disordered.

Belongs to the claudin family. Can form homo- and heteropolymeric tight junction strands. Interacts with other claudins including CLDN3, CLDN10, CLDN16 and CLDN18 with highest affinity for CLDN16. Interacts (via PDZ-binding motif TRV) with TJP1 (via PDZ domain).

The protein resides in the cell junction. It localises to the tight junction. It is found in the cell membrane. It catalyses the reaction Mg(2+)(in) = Mg(2+)(out). It carries out the reaction Ca(2+)(in) = Ca(2+)(out). The catalysed reaction is Na(+)(in) = Na(+)(out). The enzyme catalyses K(+)(in) = K(+)(out). It catalyses the reaction Rb(+)(in) = Rb(+)(out). It carries out the reaction Cs(+)(in) = Cs(+)(out). The catalysed reaction is Li(+)(in) = Li(+)(out). Forms paracellular channels: coassembles with CLDN16 into tight junction strands with cation-selective channels through the strands, conveying epithelial permeability in a process known as paracellular tight junction permeability. Involved in the maintenance of ion gradients along the nephron. In the thick ascending limb (TAL) of Henle's loop, facilitates sodium paracellular permeability from the interstitial compartment to the lumen, contributing to the lumen-positive transepithelial potential that drives paracellular magnesium and calcium reabsorption. Forms paracellular barriers on its own. In the peripheral nervous system, represents a major constituent of the tight junctions in Schwann cells and contributes to electrical sealing. During retinal neurogenesis, may regulate the barrier properties of tight junctions in retinal pigment epithelium, required for proper retinal tissue differentiation and vision. This is Claudin-19 from Homo sapiens (Human).